We begin with the raw amino-acid sequence, 493 residues long: Trichothecene 8-O-acetyltransferase (493 aa).

A compositionally biased stretch (polar residues) spans 180-191 (QDQNENEVQQPK). A disordered region spans residues 180-199 (QDQNENEVQQPKNLPDPDEP).

Its pathway is sesquiterpene biosynthesis; trichothecene biosynthesis. Its function is as follows. Trichothecene 8-O-acetyltransferase; part of 2-gene cluster involved in trichothecene C-8 modification that mediates the biosynthesis of T2-toxin. The biosynthesis of trichothecenes begins with the cyclization of farnesyl diphosphate to trichodiene and is catalyzed by the trichodiene synthase TRI5. Trichodiene undergoes a series of oxygenations catalyzed by the cytochrome P450 monooxygenase TRI4. TRI4 controls the addition of four oxygens at C-2, C-3, C-11, and the C-12, C-13-epoxide to form the intermediate isotrichotriol. Isotrichotriol then undergoes a non-enzymatic isomerization and cyclization to form isotrichodermol. During this process, the oxygen at the C-2 position becomes the pyran ring oxygen and the hydroxyl group at C-11 is lost. More complex type A trichothecenes are built by modifying isotrichodermol through a series of paired hydroxylation and acetylation or acylation steps. Isotrichodermol is converted to isotrichodermin by the acetyltransferase TRI101. TRI101 encodes a C-3 transacetylase that acts as a self-protection or resistance factor during biosynthesis and that the presence of a free C-3 hydroxyl group is a key component of Fusarium trichothecene phytotoxicity. A second hydroxyl group is added to C-15 by the trichothecene C-15 hydroxylase TRI11, producing 15-decalonectrin, which is then acetylated by TRI3, producing calonectrin. A third hydroxyl group is added at C-4 by the cytochrome P450 monooxygenase TRI13, converting calonectrin to 3,15-diacetoxyspirpenol, which is subsequently acetylated bythe acetyltransferase TRI7. A fourth hydroxyl group is added to C-8 by the cytochrome P450 monooxygenase TRI1, followed by the addition of an isovaleryl moiety by TRI16. Finally, the acetyl group is removed from the C-3 position by the trichothecene C-3 esterase TRI8 to produce T-2 toxin. The sequence is that of Trichothecene 8-O-acetyltransferase from Fusarium sporotrichioides.